A 292-amino-acid chain; its full sequence is Bis(5'-nucleosyl)-tetraphosphatase, symmetrical (292 aa).

The tract at residues 271-292 (LSIEHPRHTHTPRRQAKKHSKK) is disordered. Positions 277–292 (RHTHTPRRQAKKHSKK) are enriched in basic residues.

This sequence belongs to the Ap4A hydrolase family.

It catalyses the reaction P(1),P(4)-bis(5'-adenosyl) tetraphosphate + H2O = 2 ADP + 2 H(+). Its function is as follows. Hydrolyzes diadenosine 5',5'''-P1,P4-tetraphosphate to yield ADP. This is Bis(5'-nucleosyl)-tetraphosphatase, symmetrical (apaH) from Xylella fastidiosa (strain 9a5c).